We begin with the raw amino-acid sequence, 146 residues long: Inner membrane protein YdgK (146 aa).

The Cytoplasmic portion of the chain corresponds to 1-12; it reads MTTTTPQRIGGW. Residues 13–33 traverse the membrane as a helical segment; that stretch reads LLGPLAWLLVALLSTTLALLL. Over 34 to 59 the chain is Periplasmic; it reads YTAALSSPQTFQTLGGQALTTQILWG. The chain crosses the membrane as a helical span at residues 60–80; the sequence is VSFITAIALWYYTLWLTIAFF. At 81–89 the chain is on the cytoplasmic side; it reads KRRRCVPKH. A helical membrane pass occupies residues 90 to 110; sequence YIIWLLISVLLAVKAFAFSPV. Topologically, residues 111-112 are periplasmic; that stretch reads ED. Residues 113–133 traverse the membrane as a helical segment; that stretch reads GIAVRQLLFTLLATALIVPYF. Residues 134 to 146 lie on the Cytoplasmic side of the membrane; it reads KRSSRVKATFVNP.

To Synechocystis PCC 6803 sll0481.

It localises to the cell inner membrane. The chain is Inner membrane protein YdgK (ydgK) from Escherichia coli (strain K12).